A 310-amino-acid polypeptide reads, in one-letter code: Ribosomal RNA small subunit methyltransferase H (310 aa).

Residues 32 to 34, Asp-51, Phe-78, Asp-99, and Gln-106 contribute to the S-adenosyl-L-methionine site; that span reads AGH. The segment at 290-310 is disordered; that stretch reads GELEDNRRSRSAKLRVAEKQK.

Belongs to the methyltransferase superfamily. RsmH family.

Its subcellular location is the cytoplasm. The catalysed reaction is cytidine(1402) in 16S rRNA + S-adenosyl-L-methionine = N(4)-methylcytidine(1402) in 16S rRNA + S-adenosyl-L-homocysteine + H(+). Functionally, specifically methylates the N4 position of cytidine in position 1402 (C1402) of 16S rRNA. The protein is Ribosomal RNA small subunit methyltransferase H of Exiguobacterium sp. (strain ATCC BAA-1283 / AT1b).